The chain runs to 414 residues: Phospholipid-transporting ATPase accessory subunit LEM3 (414 aa).

Positions M1–N50 are required for localization to the plasma membrane. Topologically, residues M1–T74 are cytoplasmic. The segment at A20–R52 is disordered. A compositionally biased stretch (acidic residues) spans N26 to E42. Phosphoserine is present on S36. The helical transmembrane segment at V75–A95 threads the bilayer. Topologically, residues Q96–P372 are extracellular. 2 cysteine pairs are disulfide-bonded: C110-C159 and C216-C231. N-linked (GlcNAc...) asparagine glycosylation is present at N113. 5 N-linked (GlcNAc...) asparagine glycosylation sites follow: N240, N256, N279, N298, and N332. The chain crosses the membrane as a helical span at residues F373–L393. Residues T394–K414 lie on the Cytoplasmic side of the membrane. Positions G400–K414 are required for localization to the plasma membrane.

This sequence belongs to the CDC50/LEM3 family. Component of a flippase complex consisting of DNF1 or DNF2 and LEM3. Interacts with DNF1; the interaction is direct and required for their mutual export from the endoplasmic reticulum. Interacts with DNF2; the interaction is direct and required for their mutual export from the endoplasmic reticulum.

It localises to the cell membrane. In terms of biological role, accessory component of a P4-ATPase flippase complex which catalyzes the hydrolysis of ATP coupled to the transport of glucosylceramide, phosphatidylcholine, phosphatidylethanolamine, and small amounts of phosphatidylserine from the lumenal to the cytosolic leaflet of the cell membrane and ensures the maintenance of asymmetric distribution of phospholipids. Contributes to substrate binding and specificity of the P4-ATPase catalytic subunit. This is Phospholipid-transporting ATPase accessory subunit LEM3 from Saccharomyces cerevisiae (strain ATCC 204508 / S288c) (Baker's yeast).